Reading from the N-terminus, the 750-residue chain is Photosystem I P700 chlorophyll a apoprotein A1 (750 aa).

Transmembrane regions (helical) follow at residues 70 to 93 (VFSA…FHGA), 156 to 179 (LYCT…FHYH), 195 to 219 (LNHH…HVSL), 291 to 309 (IAHH…GHMY), 346 to 369 (WHAQ…HHMY), 385 to 411 (LSLF…IFMV), 433 to 455 (AIIS…LYIH), and 531 to 549 (FLVH…LILL). The [4Fe-4S] cluster site is built by Cys573 and Cys582. Transmembrane regions (helical) follow at residues 589 to 610 (HVFL…HFSW) and 664 to 686 (LSAY…MFLF). His675 lines the chlorophyll a' pocket. The chlorophyll a site is built by Met683 and Tyr691. Trp692 is a binding site for phylloquinone. Residues 724 to 744 (AVGVTHYLLGGIATTWAFFLA) form a helical membrane-spanning segment.

The protein belongs to the PsaA/PsaB family. As to quaternary structure, the PsaA/B heterodimer binds the P700 chlorophyll special pair and subsequent electron acceptors. PSI consists of a core antenna complex that captures photons, and an electron transfer chain that converts photonic excitation into a charge separation. The eukaryotic PSI reaction center is composed of at least 11 subunits. P700 is a chlorophyll a/chlorophyll a' dimer, A0 is one or more chlorophyll a, A1 is one or both phylloquinones and FX is a shared 4Fe-4S iron-sulfur center. serves as cofactor.

It localises to the plastid. The protein resides in the chloroplast thylakoid membrane. The enzyme catalyses reduced [plastocyanin] + hnu + oxidized [2Fe-2S]-[ferredoxin] = oxidized [plastocyanin] + reduced [2Fe-2S]-[ferredoxin]. Functionally, psaA and PsaB bind P700, the primary electron donor of photosystem I (PSI), as well as the electron acceptors A0, A1 and FX. PSI is a plastocyanin-ferredoxin oxidoreductase, converting photonic excitation into a charge separation, which transfers an electron from the donor P700 chlorophyll pair to the spectroscopically characterized acceptors A0, A1, FX, FA and FB in turn. Oxidized P700 is reduced on the lumenal side of the thylakoid membrane by plastocyanin. This Oryza nivara (Indian wild rice) protein is Photosystem I P700 chlorophyll a apoprotein A1.